We begin with the raw amino-acid sequence, 314 residues long: Porphobilinogen deaminase (314 aa).

Position 249 is an S-(dipyrrolylmethanemethyl)cysteine (cysteine 249).

Belongs to the HMBS family. Monomer. Requires dipyrromethane as cofactor.

It carries out the reaction 4 porphobilinogen + H2O = hydroxymethylbilane + 4 NH4(+). Its pathway is porphyrin-containing compound metabolism; protoporphyrin-IX biosynthesis; coproporphyrinogen-III from 5-aminolevulinate: step 2/4. Functionally, tetrapolymerization of the monopyrrole PBG into the hydroxymethylbilane pre-uroporphyrinogen in several discrete steps. In Brucella abortus (strain S19), this protein is Porphobilinogen deaminase.